The primary structure comprises 251 residues: MARFFDSRTTIFSPEGRLYQVEYAMEAASQSGTCVGLLAKNGVLLATERSVDKLMDTSIPVPRISWLNENIACCATGNTADGNVLVNQLRMIAQQYQFNFGEMIPCEQLVTNLCDIKQAYTQYGGKRPFGVSFLYMGWDCRFGFQLYQSDPSGNYSGWKATCIGRKSGAAMEMLQKELFSKGYVSPSVEEAKDVAIKVMGMTLGRDSLTPEKLEIAFVQRYGNTTVFHILEKNEIHRLIERNNNLKRRVGS.

The protein belongs to the peptidase T1A family. As to quaternary structure, the 26S proteasome consists of a 20S proteasome core and two 19S regulatory subunits. The 20S proteasome core is composed of 28 subunits that are arranged in four stacked rings, resulting in a barrel-shaped structure. The two end rings are each formed by seven alpha subunits, and the two central rings are each formed by seven beta subunits. The catalytic chamber with the active sites is on the inside of the barrel. Testis, prominent after meiosis II. After meiosis, predominantly localized to the haploid spermatid nuclei of the 64-cell cysts, remaining during the elongation and condensation of the spermatid nuclei. In mature, motile sperm, expression is seen exclusively in the sperm head.

The protein resides in the nucleus. In terms of biological role, the proteasome is a multicatalytic proteinase complex which is characterized by its ability to cleave peptides with Arg, Phe, Tyr, Leu, and Glu adjacent to the leaving group at neutral or slightly basic pH. The proteasome has an ATP-dependent proteolytic activity. In Drosophila melanogaster (Fruit fly), this protein is Proteasome subunit alpha type-4-like (Prosalpha3T).